The following is a 271-amino-acid chain: (+)-cis,trans-nepetalactol synthase NEPS1 (271 aa).

NAD(+) is bound by residues glycine 24–glycine 30, aspartate 49–glutamine 51, aspartate 72–valine 73, and asparagine 99. Substrate-binding residues include threonine 154 and tyrosine 167. Residues tyrosine 167, lysine 171, and valine 200–alanine 205 contribute to the NAD(+) site. Tyrosine 167 (proton acceptor) is an active-site residue.

It belongs to the short-chain dehydrogenases/reductases (SDR) family.

It catalyses the reaction (S)-8-oxocitronellyl enol = cis-trans-nepetalactol. It carries out the reaction cis-cis-nepetalactol + NAD(+) = cis-cis-nepetalactone + NADH + H(+). The catalysed reaction is cis-trans-nepetalactol + NAD(+) = cis-trans-nepetalactone + NADH + H(+). Bifunctional enzyme that possesses cyclase and dehydrogenase activities. Functions as a non-oxidoreductive cyclase to promote the formation of cis-trans-nepetalactol. Functions as dehydrogenase to oxidize cis-cis-nepetalactol and cis-trans-nepetalactol into nepetalactones, metabolites that are both insect-repellent and have euphoric effect in cats. Binds NAD(+) as classical short-chain dehydrogenase/reductase (SDR), but does not utilize it for its redox-neutral cyclase activity. The protein is (+)-cis,trans-nepetalactol synthase NEPS1 of Nepeta racemosa (Catmint).